The chain runs to 265 residues: Tryptophan synthase alpha chain (265 aa).

Catalysis depends on proton acceptor residues Glu49 and Glu60.

Belongs to the TrpA family. In terms of assembly, tetramer of two alpha and two beta chains.

The enzyme catalyses (1S,2R)-1-C-(indol-3-yl)glycerol 3-phosphate + L-serine = D-glyceraldehyde 3-phosphate + L-tryptophan + H2O. It participates in amino-acid biosynthesis; L-tryptophan biosynthesis; L-tryptophan from chorismate: step 5/5. In terms of biological role, the alpha subunit is responsible for the aldol cleavage of indoleglycerol phosphate to indole and glyceraldehyde 3-phosphate. In Janthinobacterium sp. (strain Marseille) (Minibacterium massiliensis), this protein is Tryptophan synthase alpha chain.